The chain runs to 184 residues: Elongation factor P (184 aa).

Belongs to the elongation factor P family.

It is found in the cytoplasm. It functions in the pathway protein biosynthesis; polypeptide chain elongation. Functionally, involved in peptide bond synthesis. Stimulates efficient translation and peptide-bond synthesis on native or reconstituted 70S ribosomes in vitro. Probably functions indirectly by altering the affinity of the ribosome for aminoacyl-tRNA, thus increasing their reactivity as acceptors for peptidyl transferase. The protein is Elongation factor P of Polaromonas naphthalenivorans (strain CJ2).